A 524-amino-acid chain; its full sequence is Lysine--tRNA ligase (524 aa).

2 residues coordinate Mg(2+): Glu433 and Glu440.

This sequence belongs to the class-II aminoacyl-tRNA synthetase family. In terms of assembly, homodimer. Mg(2+) is required as a cofactor.

The protein localises to the cytoplasm. The catalysed reaction is tRNA(Lys) + L-lysine + ATP = L-lysyl-tRNA(Lys) + AMP + diphosphate. The sequence is that of Lysine--tRNA ligase from Colwellia psychrerythraea (strain 34H / ATCC BAA-681) (Vibrio psychroerythus).